Here is a 307-residue protein sequence, read N- to C-terminus: Methionyl-tRNA formyltransferase (307 aa).

109 to 112 contributes to the (6S)-5,6,7,8-tetrahydrofolate binding site; it reads SLLP.

The protein belongs to the Fmt family.

It catalyses the reaction L-methionyl-tRNA(fMet) + (6R)-10-formyltetrahydrofolate = N-formyl-L-methionyl-tRNA(fMet) + (6S)-5,6,7,8-tetrahydrofolate + H(+). Attaches a formyl group to the free amino group of methionyl-tRNA(fMet). The formyl group appears to play a dual role in the initiator identity of N-formylmethionyl-tRNA by promoting its recognition by IF2 and preventing the misappropriation of this tRNA by the elongation apparatus. In Mycobacteroides abscessus (strain ATCC 19977 / DSM 44196 / CCUG 20993 / CIP 104536 / JCM 13569 / NCTC 13031 / TMC 1543 / L948) (Mycobacterium abscessus), this protein is Methionyl-tRNA formyltransferase.